The primary structure comprises 461 residues: Bifunctional protein GlmU (461 aa).

Positions 1 to 230 are pyrophosphorylase; it reads MSKIHAVVLA…PEETLGVNDR (230 aa). UDP-N-acetyl-alpha-D-glucosamine is bound by residues 9-12, Lys-23, Gln-73, 78-79, 101-103, Gly-140, Glu-155, Asn-170, and Asn-228; these read LAAG, GT, and YGD. Asp-103 is a Mg(2+) binding site. Asn-228 provides a ligand contact to Mg(2+). The interval 231-251 is linker; sequence VQLSEAEAYMKKRIMTGHMRN. The N-acetyltransferase stretch occupies residues 252-461; sequence GVTIIDPTST…KMPRKGKKQS (210 aa). Residues Arg-333 and Lys-351 each coordinate UDP-N-acetyl-alpha-D-glucosamine. His-363 (proton acceptor) is an active-site residue. UDP-N-acetyl-alpha-D-glucosamine is bound by residues Tyr-366 and Asn-377. Residues 386–387, Ala-423, and Arg-440 contribute to the acetyl-CoA site; that span reads NY.

It in the N-terminal section; belongs to the N-acetylglucosamine-1-phosphate uridyltransferase family. This sequence in the C-terminal section; belongs to the transferase hexapeptide repeat family. As to quaternary structure, homotrimer. Requires Mg(2+) as cofactor.

The protein resides in the cytoplasm. It catalyses the reaction alpha-D-glucosamine 1-phosphate + acetyl-CoA = N-acetyl-alpha-D-glucosamine 1-phosphate + CoA + H(+). The catalysed reaction is N-acetyl-alpha-D-glucosamine 1-phosphate + UTP + H(+) = UDP-N-acetyl-alpha-D-glucosamine + diphosphate. Its pathway is nucleotide-sugar biosynthesis; UDP-N-acetyl-alpha-D-glucosamine biosynthesis; N-acetyl-alpha-D-glucosamine 1-phosphate from alpha-D-glucosamine 6-phosphate (route II): step 2/2. It participates in nucleotide-sugar biosynthesis; UDP-N-acetyl-alpha-D-glucosamine biosynthesis; UDP-N-acetyl-alpha-D-glucosamine from N-acetyl-alpha-D-glucosamine 1-phosphate: step 1/1. It functions in the pathway bacterial outer membrane biogenesis; LPS lipid A biosynthesis. In terms of biological role, catalyzes the last two sequential reactions in the de novo biosynthetic pathway for UDP-N-acetylglucosamine (UDP-GlcNAc). The C-terminal domain catalyzes the transfer of acetyl group from acetyl coenzyme A to glucosamine-1-phosphate (GlcN-1-P) to produce N-acetylglucosamine-1-phosphate (GlcNAc-1-P), which is converted into UDP-GlcNAc by the transfer of uridine 5-monophosphate (from uridine 5-triphosphate), a reaction catalyzed by the N-terminal domain. This is Bifunctional protein GlmU from Brevibacillus brevis (strain 47 / JCM 6285 / NBRC 100599).